A 439-amino-acid polypeptide reads, in one-letter code: Chitinase-like protein Idgf1 (439 aa).

Positions 1–20 (MRFQLCYLLGLLSVTSLSHA) are cleaved as a signal peptide. Positions 22 to 439 (SNLICYYDST…IVRSIKYFMG (418 aa)) constitute a GH18 domain. C26 and C53 are disulfide-bonded. N-linked (GlcNAc...) asparagine glycosylation is found at N122, N218, and N346. A disulfide bond links C340 and C423.

This sequence belongs to the glycosyl hydrolase 18 family. IDGF subfamily. In terms of processing, glycosylated.

It is found in the secreted. Cooperates with insulin-like peptides to stimulate the proliferation, polarization and motility of imaginal disk cells. May act by stabilizing the binding of insulin-like peptides to its receptor through a simultaneous interaction with both molecules to form a multiprotein signaling complex. This chain is Chitinase-like protein Idgf1 (Idgf1), found in Drosophila yakuba (Fruit fly).